A 415-amino-acid chain; its full sequence is MTGTLTEKILSRASGKTVSPGDVIEAKTDIVAFHDLTGYHVIEVMEKANMMKIFDKTKIVVAFDHLAPPPDVRSAEIQGNIRKFVKEMRLPNFHDINVGILHELLIEQYALPGQVIVAADSHTTTSGAVGAFAQGMGASDVAAAVITGKTWLVVPQPFKVTLKGNPGKWINGKDVALELLGKFKADYFNGMSIEVHVENPKAFPMDYRATVSNMGIEMNADALMFVPDVETKDYIKTMRGKEVELVTPDPGAKYLDEHTIELDKLEPLVAAPYSVDNVKTAREESKVPVDQVYIGSCTNGRLSDFRIASEILKGKKVKTRCIAIPSSYTMFKQAMEMGYIEDLVNAGCVVTYGTCGPCLGGHFGVAGPGEVIVSTSSRNFRGRMGSNEAKVYLSGPSVAAASAATGYITDPRDVQ.

Residues cysteine 297, cysteine 355, and cysteine 358 each contribute to the [4Fe-4S] cluster site.

The protein belongs to the aconitase/IPM isomerase family. LeuC type 2 subfamily. As to quaternary structure, heterodimer of LeuC and LeuD. [4Fe-4S] cluster serves as cofactor.

It catalyses the reaction (2R,3S)-3-isopropylmalate = (2S)-2-isopropylmalate. The protein operates within amino-acid biosynthesis; L-leucine biosynthesis; L-leucine from 3-methyl-2-oxobutanoate: step 2/4. In terms of biological role, catalyzes the isomerization between 2-isopropylmalate and 3-isopropylmalate, via the formation of 2-isopropylmaleate. The sequence is that of 3-isopropylmalate dehydratase large subunit from Metallosphaera sedula (strain ATCC 51363 / DSM 5348 / JCM 9185 / NBRC 15509 / TH2).